Consider the following 418-residue polypeptide: UPF0754 membrane protein alr5253 (418 aa).

2 helical membrane passes run 10–30 (WSHL…GYFT) and 394–414 (IVSL…AFFI).

This sequence belongs to the UPF0754 family.

The protein localises to the cell inner membrane. The polypeptide is UPF0754 membrane protein alr5253 (Nostoc sp. (strain PCC 7120 / SAG 25.82 / UTEX 2576)).